A 557-amino-acid polypeptide reads, in one-letter code: uncharacterized protein (557 aa).

An N-terminal signal peptide occupies residues 1-30 (MAPRRRRHTRIAGLRVVGTATLVAATTLTA). The N-palmitoyl cysteine moiety is linked to residue cysteine 31. Residue cysteine 31 is the site of S-diacylglycerol cysteine attachment.

The protein to M.bovis Mb2616c and M.leprae ML0489.

It localises to the cell membrane. This is an uncharacterized protein from Mycobacterium tuberculosis (strain CDC 1551 / Oshkosh).